Here is a 400-residue protein sequence, read N- to C-terminus: Aspartate/prephenate aminotransferase (400 aa).

L-aspartate-binding residues include Gly39, Trp125, and Asn175. Position 239 is an N6-(pyridoxal phosphate)lysine (Lys239). Residue Arg375 coordinates L-aspartate.

This sequence belongs to the class-I pyridoxal-phosphate-dependent aminotransferase family. As to quaternary structure, homodimer. Pyridoxal 5'-phosphate is required as a cofactor.

The protein localises to the cytoplasm. It catalyses the reaction L-aspartate + 2-oxoglutarate = oxaloacetate + L-glutamate. The enzyme catalyses L-arogenate + 2-oxoglutarate = prephenate + L-glutamate. In terms of biological role, catalyzes the reversible conversion of aspartate and 2-oxoglutarate to glutamate and oxaloacetate. Can also transaminate prephenate in the presence of glutamate. The polypeptide is Aspartate/prephenate aminotransferase (Cereibacter sphaeroides (strain ATCC 17029 / ATH 2.4.9) (Rhodobacter sphaeroides)).